A 65-amino-acid chain; its full sequence is Small ribosomal subunit protein uS10 (65 aa).

It belongs to the universal ribosomal protein uS10 family. As to quaternary structure, part of the 30S ribosomal subunit.

Its function is as follows. Involved in the binding of tRNA to the ribosomes. In Desulfurococcus mucosus (Desulfurococcus mobilis), this protein is Small ribosomal subunit protein uS10 (rps10).